The chain runs to 231 residues: Probable caffeoyl-CoA O-methyltransferase 2 (231 aa).

S-adenosyl-L-methionine contacts are provided by residues threonine 53, aspartate 75, 77-78 (GV), serine 83, aspartate 101, alanine 130, aspartate 152, aspartate 154, and tyrosine 161. Aspartate 152 provides a ligand contact to a divalent metal cation. Positions 178 and 179 each coordinate a divalent metal cation.

It belongs to the class I-like SAM-binding methyltransferase superfamily. Cation-dependent O-methyltransferase family. CCoAMT subfamily.

It carries out the reaction (E)-caffeoyl-CoA + S-adenosyl-L-methionine = (E)-feruloyl-CoA + S-adenosyl-L-homocysteine + H(+). This chain is Probable caffeoyl-CoA O-methyltransferase 2 (omt6), found in Dictyostelium discoideum (Social amoeba).